The sequence spans 459 residues: Light-independent protochlorophyllide reductase subunit N (459 aa).

[4Fe-4S] cluster contacts are provided by cysteine 22, cysteine 47, and cysteine 107.

It belongs to the BchN/ChlN family. In terms of assembly, protochlorophyllide reductase is composed of three subunits; ChlL, ChlN and ChlB. Forms a heterotetramer of two ChlB and two ChlN subunits. It depends on [4Fe-4S] cluster as a cofactor.

It localises to the plastid. The protein resides in the chloroplast. The enzyme catalyses chlorophyllide a + oxidized 2[4Fe-4S]-[ferredoxin] + 2 ADP + 2 phosphate = protochlorophyllide a + reduced 2[4Fe-4S]-[ferredoxin] + 2 ATP + 2 H2O. The protein operates within porphyrin-containing compound metabolism; chlorophyll biosynthesis (light-independent). Functionally, component of the dark-operative protochlorophyllide reductase (DPOR) that uses Mg-ATP and reduced ferredoxin to reduce ring D of protochlorophyllide (Pchlide) to form chlorophyllide a (Chlide). This reaction is light-independent. The NB-protein (ChlN-ChlB) is the catalytic component of the complex. This is Light-independent protochlorophyllide reductase subunit N from Pinus contorta (Shore pine).